Reading from the N-terminus, the 235-residue chain is MTKRVLVKFSGEALAGKEGYGIDTKILKFIASEIKALVDAGMEVAIVVGGGNIIRGVSAAADGIIKRTSGDYMGMLATVINGVAIQEALEHIGLEARLQSAIDMHEIGEAFIIRRARRHLEKGRVVIFAGGTGNPYFTTDTAATLRASEIEAELLIKATKVDGVYDKDPNKFDDAVKLDTLTYEQALTKDIKVMDDTSIALARENSLPIVVCNMFEEGNLLAIMKGDMSLCSIVK.

An ATP-binding site is contributed by 8 to 11 (KFSG). Residues 16–21 (GKEGYG) form an involved in allosteric activation by GTP region. Glycine 50 lines the UMP pocket. ATP is bound by residues glycine 51 and arginine 55. Residues aspartate 71 and 132–139 (TGNPYFTT) each bind UMP. ATP contacts are provided by threonine 159, tyrosine 165, and aspartate 168.

It belongs to the UMP kinase family. In terms of assembly, homohexamer.

It localises to the cytoplasm. The catalysed reaction is UMP + ATP = UDP + ADP. It participates in pyrimidine metabolism; CTP biosynthesis via de novo pathway; UDP from UMP (UMPK route): step 1/1. Allosterically activated by GTP. Inhibited by UTP. Functionally, catalyzes the reversible phosphorylation of UMP to UDP. The chain is Uridylate kinase from Sulfurovum sp. (strain NBC37-1).